A 193-amino-acid polypeptide reads, in one-letter code: Xanthine phosphoribosyltransferase (193 aa).

Xanthine contacts are provided by Leu-20 and Thr-27. 128–132 contributes to the 5-phospho-alpha-D-ribose 1-diphosphate binding site; sequence ANGQA. Lys-156 is a xanthine binding site.

It belongs to the purine/pyrimidine phosphoribosyltransferase family. Xpt subfamily. In terms of assembly, homodimer.

The protein localises to the cytoplasm. It catalyses the reaction XMP + diphosphate = xanthine + 5-phospho-alpha-D-ribose 1-diphosphate. It functions in the pathway purine metabolism; XMP biosynthesis via salvage pathway; XMP from xanthine: step 1/1. In terms of biological role, converts the preformed base xanthine, a product of nucleic acid breakdown, to xanthosine 5'-monophosphate (XMP), so it can be reused for RNA or DNA synthesis. This is Xanthine phosphoribosyltransferase from Streptococcus pneumoniae serotype 19F (strain G54).